Reading from the N-terminus, the 1710-residue chain is Latrophilin Cirl (1710 aa).

The Extracellular portion of the chain corresponds to 1 to 767 (MLPTILSISY…LFTMFDGNMR (767 aa)). An SUEL-type lectin domain is found at 25-114 (ACEGKKLTIE…KYLEAHYQCI (90 aa)). N-linked (GlcNAc...) asparagine glycosylation occurs at N142. The segment at 183–304 (QHTAVTHSTP…SGSVVPGNGS (122 aa)) is disordered. 2 stretches are compositionally biased toward polar residues: residues 185 to 198 (TAVT…STTA) and 256 to 265 (NATSPSNTRI). N-linked (GlcNAc...) asparagine glycosylation occurs at N256. 2 stretches are compositionally biased toward low complexity: residues 275 to 285 (DDGTLLTTKSS) and 295 to 304 (SGSVVPGNGS). N302 and N341 each carry an N-linked (GlcNAc...) asparagine glycan. The tract at residues 376–400 (YDEYDDDPSSTTPATSSADCLHNSS) is disordered. The segment covering 384–394 (SSTTPATSSAD) has biased composition (low complexity). Residues N398, N655, N703, and N730 are each glycosylated (N-linked (GlcNAc...) asparagine). A GAIN-B domain is found at 561–754 (RSVVQKVKNI…AILMDVVDEH (194 aa)). 2 cysteine pairs are disulfide-bonded: C709-C736 and C724-C738. The segment at 709 to 754 (CVFWNYIDHAWSANGCSLESTNRTHSVCSCNHLTNFAILMDVVDEH) is GPS. Residues 768–788 (IFIYISIGICVVFIVIALLTL) traverse the membrane as a helical segment. The Cytoplasmic segment spans residues 789–801 (KLFNGVFVKSART). A helical transmembrane segment spans residues 802 to 822 (SIYTSIYLCLLAIELLFLLGI). Residues 823–828 (EQTETS) lie on the Extracellular side of the membrane. Residues 829-849 (IFCGFITIFLHCAILSGTAWF) traverse the membrane as a helical segment. Residues 850–875 (CYEAFHSYSTLTSDELLLEVDQTPKV) are Cytoplasmic-facing. Residues 876-896 (NCYYLLSYGLSLSVVAISLVI) traverse the membrane as a helical segment. Topologically, residues 897 to 920 (DPSTYTQNDYCVLMEANALFYATF) are extracellular. Residues 921 to 941 (VMPVLVFFVAAIGYTFLSWII) traverse the membrane as a helical segment. Over 942–968 (MCRKSRTGLKTKEHTRLASVRFDIRCS) the chain is Cytoplasmic. The chain crosses the membrane as a helical span at residues 969–989 (FVFLLLLSAVWCSAYFYLRGA). Residues 990–999 (KMDDDTADVY) lie on the Extracellular side of the membrane. Residues 1000–1020 (GYCFICFNTLLGLYIFVFHCI) form a helical membrane-spanning segment. Residues 1021-1710 (QNEKIRREYR…VRCYLEPLAK (690 aa)) are Cytoplasmic-facing. Phosphoserine occurs at positions 1156, 1253, 1260, 1329, and 1330. Positions 1234-1259 (KPNSGQHGKKKRGAGGVPASPSGSLH) are disordered. Disordered regions lie at residues 1452-1540 (GGGS…SDER) and 1568-1690 (DYGA…QQRH). Residues 1458–1483 (GGSVSSRSQQQQLKKQQQQQSLAQQR) show a composition bias toward low complexity. Acidic residues-rich tracts occupy residues 1491 to 1505 (DDDD…EEAT) and 1515 to 1528 (CDED…DLED). The segment covering 1638–1650 (QTPAQKRQQLQKL) has biased composition (polar residues). Positions 1651-1672 (SPQSTTSSSSHTSHSNPNPHPH) are enriched in low complexity. Residues 1673-1689 (QLTHPHPHQHPPHHQQR) are compositionally biased toward basic residues.

It belongs to the G-protein coupled receptor 2 family. LN-TM7 subfamily. In terms of assembly, forms a heterodimer, consisting of a large extracellular region non-covalently linked to a seven-transmembrane moiety. Post-translationally, proteolytically cleaved into 2 subunits, an extracellular subunit and a seven-transmembrane subunit.

It is found in the cell membrane. This is Latrophilin Cirl from Drosophila erecta (Fruit fly).